The primary structure comprises 414 residues: Snake venom metalloproteinase (414 aa).

The signal sequence occupies residues 1-20 (MIEVLLVTICLAVFPYQGSS). Residues 21-190 (IILESGNVND…KASDLNFNSD (170 aa)) constitute a propeptide that is removed on maturation. Position 191 is a pyrrolidone carboxylic acid (glutamine 191). The Peptidase M12B domain maps to 197 to 393 (RYVELVIVAD…YKPQCILNKP (197 aa)). Positions 200 and 284 each coordinate Ca(2+). 2 disulfide bridges follow: cysteine 308/cysteine 388 and cysteine 348/cysteine 355. Histidine 333 is a binding site for Zn(2+). Glutamate 334 is an active-site residue. The Zn(2+) site is built by histidine 337 and histidine 343. Residues cysteine 388 and asparagine 391 each coordinate Ca(2+). The propeptide occupies 394 to 414 (LRIDPVSTPVSGNELLEAGEE).

It belongs to the venom metalloproteinase (M12B) family. P-I subfamily. Monomer. Requires Zn(2+) as cofactor. In terms of tissue distribution, expressed by the venom gland.

It localises to the secreted. In terms of biological role, snake venom metalloproteinase that impairs hemostasis in the envenomed animal. In Crotalus molossus molossus (Northern black-tailed rattlesnake), this protein is Snake venom metalloproteinase.